Consider the following 723-residue polypeptide: Transmembrane channel-like protein 7 (723 aa).

The disordered stretch occupies residues 1–21 (MSESSASALQLGRPSRQPAVH). The Extracellular segment spans residues 1–168 (MSESSASALQ…GIQSYFSFLR (168 aa)). N24 is a glycosylation site (N-linked (GlcNAc...) asparagine). Positions 51 to 70 (RRRTTVHSRDKQSGTLLKST) are disordered. Residue N84 is glycosylated (N-linked (GlcNAc...) asparagine). Phosphoserine is present on S89. The N-linked (GlcNAc...) asparagine glycan is linked to N96. A helical transmembrane segment spans residues 169 to 189 (FLVLLNLVIFLIIFMLVLLPI). Over 190-219 (LLTKYKITNSSFVLIPFKDTDIQCTVYPVS) the chain is Cytoplasmic. The chain crosses the membrane as a helical span at residues 220–240 (SSGLIYFYSYIIDLLSGTGFL). The Extracellular segment spans residues 241–263 (EETSLFYGHYTIDGVKFQNFTYD). N-linked (GlcNAc...) asparagine glycosylation is present at N259. Residues 264 to 284 (LPLAYLISTIAYLALSLLWIV) traverse the membrane as a helical segment. The Cytoplasmic portion of the chain corresponds to 285 to 362 (KRSVEGFKIN…EETIRIYSLR (78 aa)). Residues 363 to 383 (LFLNCIVLAVLGACFYAIYVA) traverse the membrane as a helical segment. Over 384-404 (TVFSQEHMKKEIDKMVFGENL) the chain is Extracellular. A helical transmembrane segment spans residues 405–425 (LILYLPSIVITLANFITPMIF). Topologically, residues 426-494 (AKIIRYEDYS…PCWETQVGQE (69 aa)) are cytoplasmic. A helical transmembrane segment spans residues 495-515 (MYKLMIFDFIIILAVTLFVDF). Topologically, residues 516–555 (PRKLLVTYCSSWKLIQCWGQQEFAIPDNVLGIVYGQTICW) are extracellular. A helical membrane pass occupies residues 556 to 576 (IGAFFSPLLPAIATLKFIIIF). The Cytoplasmic segment spans residues 577 to 601 (YVKEWSLLYTCRPSPRPFRASNSNF). The helical transmembrane segment at 602–622 (FFLLVLLIGLCLAIIPLTISI) threads the bilayer. Residues 623–665 (SRIPSSKACGPFTNFNTTWEVIPKTVSTFPSSLQSFIHGVTSE) lie on the Extracellular side of the membrane. A glycan (N-linked (GlcNAc...) asparagine) is linked at N638. Residues 666–686 (AFAVPFFMIICLIMFYFIALA) traverse the membrane as a helical segment. The Cytoplasmic portion of the chain corresponds to 687–723 (GAHKRVVIQLREQLSLESRDKRYLIQKLTEAQRDTRN).

The protein belongs to the TMC family. In terms of assembly, interacts with PIEZO2; the interaction inhibits PIEZO2-conducted mechanically activated currents.

The protein localises to the membrane. Functionally, acts as an inhibitory modulator of PIEZO2 mechanosensitive channel in dorsal root ganglion (DRG) neurons through physical interactions or interference with the interaction between Piezo2 and the cytoskeleton. The protein is Transmembrane channel-like protein 7 (TMC7) of Macaca fascicularis (Crab-eating macaque).